Reading from the N-terminus, the 556-residue chain is Oxygen-dependent choline dehydrogenase (556 aa).

4-33 is a binding site for FAD; the sequence is DYIIIGAGSAGNVLATRLTEDPNTSVLLLE. H473 acts as the Proton acceptor in catalysis.

Belongs to the GMC oxidoreductase family. The cofactor is FAD.

The enzyme catalyses choline + A = betaine aldehyde + AH2. It carries out the reaction betaine aldehyde + NAD(+) + H2O = glycine betaine + NADH + 2 H(+). Its pathway is amine and polyamine biosynthesis; betaine biosynthesis via choline pathway; betaine aldehyde from choline (cytochrome c reductase route): step 1/1. In terms of biological role, involved in the biosynthesis of the osmoprotectant glycine betaine. Catalyzes the oxidation of choline to betaine aldehyde and betaine aldehyde to glycine betaine at the same rate. The protein is Oxygen-dependent choline dehydrogenase of Escherichia coli (strain K12 / DH10B).